The primary structure comprises 419 residues: 26S proteasome regulatory subunit 8 homolog A (419 aa).

N-acetylalanine is present on Ala2. 202-209 (GPPGTGKT) lines the ATP pocket. A Glycyl lysine isopeptide (Lys-Gly) (interchain with G-Cter in ubiquitin) cross-link involves residue Lys406.

Belongs to the AAA ATPase family. In terms of assembly, component of the 19S regulatory particle (RP/PA700) base subcomplex of the 26S proteasome. The 26S proteasome is composed of a core protease (CP), known as the 20S proteasome, capped at one or both ends by the 19S regulatory particle (RP/PA700). The RP/PA700 complex is composed of at least 17 different subunits in two subcomplexes, the base and the lid, which form the portions proximal and distal to the 20S proteolytic core, respectively.

The protein localises to the cytoplasm. It localises to the nucleus. In terms of biological role, the 26S proteasome is involved in the ATP-dependent degradation of ubiquitinated proteins. The regulatory (or ATPase) complex confers ATP dependency and substrate specificity to the 26S complex. The sequence is that of 26S proteasome regulatory subunit 8 homolog A (RPT6A) from Arabidopsis thaliana (Mouse-ear cress).